The following is a 201-amino-acid chain: Prostamide/prostaglandin F synthase (201 aa).

It belongs to the peroxiredoxin-like PRXL2 family. Prostamide/prostaglandin F synthase subfamily.

The protein localises to the cytoplasm. The protein resides in the cytosol. The enzyme catalyses prostaglandin H2 + [thioredoxin]-dithiol = prostaglandin F2alpha + [thioredoxin]-disulfide. It carries out the reaction prostamide F2alpha + [thioredoxin]-disulfide = prostamide H2 + [thioredoxin]-dithiol. Functionally, catalyzes the reduction of prostaglandin-ethanolamide H(2) (prostamide H(2)) to prostamide F(2alpha) with NADPH as proton donor. Also able to reduce prostaglandin H(2) to prostaglandin F(2alpha). This chain is Prostamide/prostaglandin F synthase (prxl2b), found in Danio rerio (Zebrafish).